A 503-amino-acid polypeptide reads, in one-letter code: 11-hydroxysugiol 20-monooxygenase (503 aa).

Residues 2 to 22 form a helical membrane-spanning segment; sequence QVLIVASLAFLAAWLVYSRWS. C446 provides a ligand contact to heme.

The protein belongs to the cytochrome P450 family. Requires heme as cofactor. As to expression, highly expressed in roots.

It is found in the membrane. The enzyme catalyses 11-hydroxysugiol + reduced [NADPH--hemoprotein reductase] + O2 = 11,20-dihydroxysugiol + oxidized [NADPH--hemoprotein reductase] + H2O + H(+). It catalyses the reaction 11-hydroxyferruginol + reduced [NADPH--hemoprotein reductase] + O2 = 11,20-dihydroxyferruginol + oxidized [NADPH--hemoprotein reductase] + H2O + H(+). The protein operates within secondary metabolite biosynthesis; terpenoid biosynthesis. Monooxygenase that oxidizes 11-hydroxysugiol to produce 11,20-dihydroxysugiol. Can oxidize 11-hydroxyferruginol to produce 11,20-dihydroxyferruginol. These products are intermediates in tanshinone biosynthesis. This Salvia miltiorrhiza (Chinese sage) protein is 11-hydroxysugiol 20-monooxygenase.